The following is a 323-amino-acid chain: Putative HTH-type transcriptional regulatory protein Mbur_1811 (323 aa).

Residues 132 to 190 (LKEARMNVSMSLGALASELGVSRRTISKYEEGQMDASIDIVLHLEEILDMALAKSIDIL) enclose the HTH cro/C1-type domain. Positions 143–162 (LGALASELGVSRRTISKYEE) form a DNA-binding region, H-T-H motif.

The chain is Putative HTH-type transcriptional regulatory protein Mbur_1811 from Methanococcoides burtonii (strain DSM 6242 / NBRC 107633 / OCM 468 / ACE-M).